A 473-amino-acid chain; its full sequence is Putative protein TIC 214 C-terminal part (473 aa).

This sequence belongs to the TIC214 family. In terms of assembly, part of the Tic complex.

The protein resides in the plastid. Its subcellular location is the chloroplast. Its function is as follows. Involved in protein precursor import into chloroplasts. May be part of an intermediate translocation complex acting as a protein-conducting channel at the inner envelope. The sequence is that of Putative protein TIC 214 C-terminal part from Anthoceros angustus (Hornwort).